Consider the following 546-residue polypeptide: Glucose-6-phosphate isomerase (546 aa).

Catalysis depends on Glu-356, which acts as the Proton donor. Residues His-387 and Lys-507 contribute to the active site.

This sequence belongs to the GPI family.

The protein localises to the cytoplasm. It carries out the reaction alpha-D-glucose 6-phosphate = beta-D-fructose 6-phosphate. Its pathway is carbohydrate biosynthesis; gluconeogenesis. It participates in carbohydrate degradation; glycolysis; D-glyceraldehyde 3-phosphate and glycerone phosphate from D-glucose: step 2/4. In terms of biological role, catalyzes the reversible isomerization of glucose-6-phosphate to fructose-6-phosphate. The protein is Glucose-6-phosphate isomerase of Syntrophus aciditrophicus (strain SB).